We begin with the raw amino-acid sequence, 105 residues long: DNA-directed RNA polymerase subunit omega (105 aa).

This sequence belongs to the RNA polymerase subunit omega family. As to quaternary structure, the RNAP catalytic core consists of 2 alpha, 1 beta, 1 beta' and 1 omega subunit. When a sigma factor is associated with the core the holoenzyme is formed, which can initiate transcription.

It catalyses the reaction RNA(n) + a ribonucleoside 5'-triphosphate = RNA(n+1) + diphosphate. Its function is as follows. Promotes RNA polymerase assembly. Latches the N- and C-terminal regions of the beta' subunit thereby facilitating its interaction with the beta and alpha subunits. This chain is DNA-directed RNA polymerase subunit omega, found in Streptococcus equi subsp. equi (strain 4047).